A 471-amino-acid polypeptide reads, in one-letter code: Ribulose bisphosphate carboxylase large chain 2 (471 aa).

2 residues coordinate substrate: Asn-116 and Thr-166. Lys-168 serves as the catalytic Proton acceptor. A substrate-binding site is contributed by Lys-170. 3 residues coordinate Mg(2+): Lys-194, Asp-196, and Glu-197. Lys-194 is modified (N6-carboxylysine). His-287 serves as the catalytic Proton acceptor. The substrate site is built by Arg-288, His-320, and Ser-372.

The protein belongs to the RuBisCO large chain family. Type I subfamily. Heterohexadecamer of 8 large chains and 8 small chains. Forms a CsoS2-CsoS1-RuBisCO complex. Mg(2+) is required as a cofactor.

The protein localises to the carboxysome. The catalysed reaction is 2 (2R)-3-phosphoglycerate + 2 H(+) = D-ribulose 1,5-bisphosphate + CO2 + H2O. It catalyses the reaction D-ribulose 1,5-bisphosphate + O2 = 2-phosphoglycolate + (2R)-3-phosphoglycerate + 2 H(+). Its function is as follows. RuBisCO catalyzes two reactions: the carboxylation of D-ribulose 1,5-bisphosphate, the primary event in carbon dioxide fixation, as well as the oxidative fragmentation of the pentose substrate. Both reactions occur simultaneously and in competition at the same active site. Replacing the endogenous type I ccbLS genes in H.neapolitanus with this carboxysomally targeted enzyme reconstitutes RuBisCO with about 25% of normal activity; the active enzyme is targeted to carboxysomes. The sequence is that of Ribulose bisphosphate carboxylase large chain 2 from Hydrogenovibrio crunogenus (strain DSM 25203 / XCL-2) (Thiomicrospira crunogena).